Reading from the N-terminus, the 890-residue chain is Probable LRR receptor-like serine/threonine-protein kinase At1g51860 (890 aa).

The first 23 residues, 1-23, serve as a signal peptide directing secretion; sequence MKSLHWFLHLLIIAFTVLRSVEA. At 24-513 the chain is on the extracellular side; sequence QNQAGFISLD…KESKKVPMVA (490 aa). Residues N49, N96, N142, N181, N256, N285, N289, N295, N312, N332, N340, N402, and N419 are each glycosylated (N-linked (GlcNAc...) asparagine). LRR repeat units lie at residues 412–435, 436–458, and 460–481; these read RIIS…SKLT, LLTV…FAEM, and SLKL…PDSL. N-linked (GlcNAc...) asparagine glycosylation is found at N465, N473, and N497. A helical transmembrane segment spans residues 514–534; that stretch reads IAASVAGVFALLVILAIFFVI. Residues 535-890 lie on the Cytoplasmic side of the membrane; the sequence is KRKNVKAHKS…STSDFAPGAR (356 aa). Position 575 is a phosphothreonine (T575). One can recognise a Protein kinase domain in the interval 584 to 856; it reads NNFERVLGKG…HVVMELNDCV (273 aa). Residues 590-598 and K611 contribute to the ATP site; that span reads LGKGGFGTV. The residue at position 656 (Y656) is a Phosphotyrosine. Residue D708 is the Proton acceptor of the active site. Residue S742 is modified to Phosphoserine. Phosphothreonine occurs at positions 743 and 748. Y756 bears the Phosphotyrosine mark.

It belongs to the protein kinase superfamily. Ser/Thr protein kinase family.

The protein localises to the membrane. The enzyme catalyses L-seryl-[protein] + ATP = O-phospho-L-seryl-[protein] + ADP + H(+). The catalysed reaction is L-threonyl-[protein] + ATP = O-phospho-L-threonyl-[protein] + ADP + H(+). The chain is Probable LRR receptor-like serine/threonine-protein kinase At1g51860 from Arabidopsis thaliana (Mouse-ear cress).